Here is a 122-residue protein sequence, read N- to C-terminus: Ribosome-binding factor A (122 aa).

Belongs to the RbfA family. As to quaternary structure, monomer. Binds 30S ribosomal subunits, but not 50S ribosomal subunits or 70S ribosomes.

It is found in the cytoplasm. One of several proteins that assist in the late maturation steps of the functional core of the 30S ribosomal subunit. Associates with free 30S ribosomal subunits (but not with 30S subunits that are part of 70S ribosomes or polysomes). Required for efficient processing of 16S rRNA. May interact with the 5'-terminal helix region of 16S rRNA. The chain is Ribosome-binding factor A from Streptococcus agalactiae serotype III (strain NEM316).